Consider the following 123-residue polypeptide: D-ribose pyranase (123 aa).

The active-site Proton donor is the His20. Substrate contacts are provided by residues Asp28, His90, and 112 to 114; that span reads YAN.

Belongs to the RbsD / FucU family. RbsD subfamily. In terms of assembly, homodecamer.

The protein localises to the cytoplasm. The enzyme catalyses beta-D-ribopyranose = beta-D-ribofuranose. The protein operates within carbohydrate metabolism; D-ribose degradation; D-ribose 5-phosphate from beta-D-ribopyranose: step 1/2. In terms of biological role, catalyzes the interconversion of beta-pyran and beta-furan forms of D-ribose. This chain is D-ribose pyranase, found in Corynebacterium glutamicum (strain ATCC 13032 / DSM 20300 / JCM 1318 / BCRC 11384 / CCUG 27702 / LMG 3730 / NBRC 12168 / NCIMB 10025 / NRRL B-2784 / 534).